We begin with the raw amino-acid sequence, 271 residues long: Probable iron transport system membrane protein HI_0359 (271 aa).

The next 8 membrane-spanning stretches (helical) occupy residues 17-37 (ALLTALIVSIICALLSCYLVL), 55-75 (IVLAYLAGIPLAIGAFFSGIF), 93-113 (TAMGIVFSGMFAIGLVMFTKI), 131-151 (SHQELIQSAVISAIIFCLIVF), 168-188 (VAGLSPKILHYGLLILLALTI), 194-214 (VVGVILVVAMLIAPGITALTL), 221-241 (MLWVAIASSIASSLIGVILSY), and 245-265 (ASTGACIILLQAAFFVIALAY).

Belongs to the ABC-3 integral membrane protein family.

It is found in the cell inner membrane. Functionally, part of an ATP-driven transport system HI_0359/HI_0360/HI_0361/HI_0362 for iron. The protein is Probable iron transport system membrane protein HI_0359 of Haemophilus influenzae (strain ATCC 51907 / DSM 11121 / KW20 / Rd).